We begin with the raw amino-acid sequence, 382 residues long: 4-hydroxy-3-methylbut-2-en-1-yl diphosphate synthase (flavodoxin) (382 aa).

[4Fe-4S] cluster is bound by residues C273, C276, C308, and E315.

Belongs to the IspG family. [4Fe-4S] cluster is required as a cofactor.

It catalyses the reaction (2E)-4-hydroxy-3-methylbut-2-enyl diphosphate + oxidized [flavodoxin] + H2O + 2 H(+) = 2-C-methyl-D-erythritol 2,4-cyclic diphosphate + reduced [flavodoxin]. It functions in the pathway isoprenoid biosynthesis; isopentenyl diphosphate biosynthesis via DXP pathway; isopentenyl diphosphate from 1-deoxy-D-xylulose 5-phosphate: step 5/6. In terms of biological role, converts 2C-methyl-D-erythritol 2,4-cyclodiphosphate (ME-2,4cPP) into 1-hydroxy-2-methyl-2-(E)-butenyl 4-diphosphate. The chain is 4-hydroxy-3-methylbut-2-en-1-yl diphosphate synthase (flavodoxin) from Gluconacetobacter diazotrophicus (strain ATCC 49037 / DSM 5601 / CCUG 37298 / CIP 103539 / LMG 7603 / PAl5).